Here is a 352-residue protein sequence, read N- to C-terminus: Ion-translocating oxidoreductase complex subunit D (352 aa).

4 helical membrane-spanning segments follow: residues 20–40 (IMLL…WFFG), 42–62 (GTLF…AIVL), 69–91 (VASH…SIPP), and 123–143 (PAMI…TSWL). Thr187 bears the FMN phosphoryl threonine mark. The next 5 membrane-spanning stretches (helical) occupy residues 215–235 (LAGV…VFLL), 242–262 (WHIP…GWLF), 267–287 (LASP…FFIL), 301–321 (LIFG…GGYP), and 322–342 (DGVA…DYYT).

The protein belongs to the NqrB/RnfD family. As to quaternary structure, the complex is composed of six subunits: RsxA, RsxB, RsxC, RsxD, RsxE and RsxG. It depends on FMN as a cofactor.

It localises to the cell inner membrane. Functionally, part of a membrane-bound complex that couples electron transfer with translocation of ions across the membrane. Required to maintain the reduced state of SoxR. The sequence is that of Ion-translocating oxidoreductase complex subunit D from Salmonella paratyphi A (strain ATCC 9150 / SARB42).